The chain runs to 369 residues: UPF0324 membrane protein DVU_0543 (369 aa).

Transmembrane regions (helical) follow at residues 13-31 (IVPGLLVMVGTLYVLRTYV), 46-65 (WLVQVLSLNYILLSILTGMF), 110-132 (GGVAITLIVAFVFGTAIFIMWLG), 142-164 (TATMAAACGVCGVSAAVATAPGV), 171-193 (LALSIATILGFGIMTMFVSPFIG), 240-262 (WNVVRVICIPFVVFFITAWYWKG), 269-291 (TSLGSILASKFPIFVLGFVGMTA), 306-328 (LHLMRDVMAWIFGVGLVGLGAYI), and 341-363 (LRIGLIAGMVKYILALIIILAFI).

It belongs to the UPF0324 family.

It is found in the cell membrane. The chain is UPF0324 membrane protein DVU_0543 from Nitratidesulfovibrio vulgaris (strain ATCC 29579 / DSM 644 / CCUG 34227 / NCIMB 8303 / VKM B-1760 / Hildenborough) (Desulfovibrio vulgaris).